The chain runs to 666 residues: Sodium/potassium/calcium exchanger 2 (666 aa).

Residues 1–38 (MDLHQSPTARLLQKWCSHESPFGCRRHYNSRKKLKLIR) are Cytoplasmic-facing. Residues 39-59 (VIGLVMGLVAVSTVPFSISAF) traverse the membrane as a helical segment. Topologically, residues 60–133 (TETDSQSNRG…DIFSLEERRK (74 aa)) are extracellular. A disordered region spans residues 63–122 (DSQSNRGEASDMSGPRVAQGHRQRTLLDLNDKIRDYTPQPPASQEDQAENSTEHTQGDYP). The N-linked (GlcNAc...) asparagine glycan is linked to N112. Residues 113–122 (STEHTQGDYP) show a composition bias toward basic and acidic residues. A helical membrane pass occupies residues 134 to 154 (GAIILHVIGMIYMFIALAIVC). Over 155-179 (DEFFVPSLTVITEKLGISDDVAGAT) the chain is Cytoplasmic. Residues 175-215 (VAGATFMAAGGSAPELFTSLIGVFIAHSNVGIGTIVGSAVF) form an Alpha-1 repeat. The chain crosses the membrane as a helical span at residues 180 to 200 (FMAAGGSAPELFTSLIGVFIA). Over 201–205 (HSNVG) the chain is Extracellular. Residues 206–226 (IGTIVGSAVFNILFVIGMCAL) form a helical membrane-spanning segment. At 227–237 (FSREILNLTWW) the chain is on the cytoplasmic side. A helical membrane pass occupies residues 238–258 (PLFRDVSFYIVDLLMLITFFL). The Extracellular segment spans residues 259–260 (DN). A helical membrane pass occupies residues 261-281 (VIMWWESLLLLTAYFAYVVFM). Over 282-502 (KFNVQVERWV…PDVRKPASRK (221 aa)) the chain is Cytoplasmic. Residues 311–336 (KSPTAGDKDGPTLPSKPRLQRGGSSA) form a disordered region. Residues S337 and S341 each carry the phosphoserine modification. The disordered stretch occupies residues 397–467 (VDENERQNGA…EEDDQPLSLS (71 aa)). Residues 416–442 (PNSTSTEVEMTPSSEASEPVQNGNLSH) are compositionally biased toward polar residues. The helical transmembrane segment at 503–523 (FFPITFFGSITWIAVFSYLMV) threads the bilayer. The Extracellular segment spans residues 524–538 (WWAHQVGETIGISEE). A helical transmembrane segment spans residues 539 to 559 (IMGLTILAAGTSIPDLITSVI). An Alpha-2 repeat occupies 546–577 (AAGTSIPDLITSVIVARKGLGDMAVSSSVGSN). Residues 560 to 574 (VARKGLGDMAVSSSV) are Cytoplasmic-facing. The helical transmembrane segment at 575–595 (GSNIFDITVGLPLPWLLYTII) threads the bilayer. At 596–607 (HRFSPVTVSSNG) the chain is on the extracellular side. Residues 608-628 (LFCAIVLLFIMLLFVILSIAL) traverse the membrane as a helical segment. At 629 to 635 (CKWRMNK) the chain is on the cytoplasmic side. Residues 636-656 (ILGFIMFGLYFVFLVVSVLLE) form a helical membrane-spanning segment. Residues 657 to 666 (DKVLVCPVSI) lie on the Extracellular side of the membrane.

Belongs to the Ca(2+):cation antiporter (CaCA) (TC 2.A.19) family. SLC24A subfamily.

It is found in the cell membrane. It catalyses the reaction Ca(2+)(out) + K(+)(out) + 4 Na(+)(in) = Ca(2+)(in) + K(+)(in) + 4 Na(+)(out). Its function is as follows. Calcium, potassium:sodium antiporter that transports 1 Ca(2+) and 1 K(+) in exchange for 4 Na(+). Required for learming and memory by regulating neuronal Ca(2+), which is essential for the development of synaptic plasticity. The protein is Sodium/potassium/calcium exchanger 2 of Mus musculus (Mouse).